We begin with the raw amino-acid sequence, 472 residues long: Serine/threonine-protein phosphatase T (472 aa).

TPR repeat units lie at residues Ala-7–Pro-40, Thr-41–Phe-73, and Ala-74–Asn-107. Mn(2+) contacts are provided by Asp-217, His-219, Asp-246, and Asn-278. His-279 acts as the Proton donor/acceptor in catalysis. Residues His-327 and His-403 each coordinate Mn(2+).

This sequence belongs to the PPP phosphatase family. PP-5 (PP-T) subfamily. The cofactor is Mg(2+). Mn(2+) is required as a cofactor.

The protein resides in the cytoplasm. The protein localises to the cytosol. It localises to the nucleus. The catalysed reaction is O-phospho-L-seryl-[protein] + H2O = L-seryl-[protein] + phosphate. It carries out the reaction O-phospho-L-threonyl-[protein] + H2O = L-threonyl-[protein] + phosphate. Activated by arachidonic acid. In terms of biological role, may function as a protein phosphatase. The polypeptide is Serine/threonine-protein phosphatase T (Trypanosoma brucei brucei (strain 927/4 GUTat10.1)).